The chain runs to 333 residues: Protein-methionine-sulfoxide reductase catalytic subunit MsrP (333 aa).

Positions 1–43 form a signal peptide, tat-type signal; the sequence is MHKHRKPTEADVTPESLFYQRRRVLKALGISAAALSLPLSAQA. Mo-molybdopterin is bound by residues Asn-87, 90 to 91, Cys-145, Thr-180, Asn-232, Arg-237, and 248 to 250; these read YE and NIK.

This sequence belongs to the MsrP family. Heterodimer of a catalytic subunit (MsrP) and a heme-binding subunit (MsrQ). Mo-molybdopterin serves as cofactor. Post-translationally, predicted to be exported by the Tat system. The position of the signal peptide cleavage has not been experimentally proven.

It localises to the periplasm. It carries out the reaction L-methionyl-[protein] + a quinone + H2O = L-methionyl-(S)-S-oxide-[protein] + a quinol. It catalyses the reaction L-methionyl-[protein] + a quinone + H2O = L-methionyl-(R)-S-oxide-[protein] + a quinol. Part of the MsrPQ system that repairs oxidized periplasmic proteins containing methionine sulfoxide residues (Met-O), using respiratory chain electrons. Thus protects these proteins from oxidative-stress damage caused by reactive species of oxygen and chlorine generated by the host defense mechanisms. MsrPQ is essential for the maintenance of envelope integrity under bleach stress, rescuing a wide series of structurally unrelated periplasmic proteins from methionine oxidation. The catalytic subunit MsrP is non-stereospecific, being able to reduce both (R-) and (S-) diastereoisomers of methionine sulfoxide. The polypeptide is Protein-methionine-sulfoxide reductase catalytic subunit MsrP (Pectobacterium atrosepticum (strain SCRI 1043 / ATCC BAA-672) (Erwinia carotovora subsp. atroseptica)).